Consider the following 527-residue polypeptide: Monooxygenase aurF (527 aa).

Positions 1–19 (MPNPTVAIVGLGALGLVTL) are cleaved as a signal peptide. N-linked (GlcNAc...) asparagine glycosylation occurs at asparagine 59.

This sequence belongs to the FMO family. As to quaternary structure, might be part of an extracellular enzyme complex composed of GIP1, aurF, aurO and aurS. The cofactor is FAD.

Its subcellular location is the secreted. It localises to the extracellular space. Its pathway is pigment biosynthesis. Its function is as follows. Monooxygenase; part of the gene cluster that mediates the biosynthesis of aurofusarin, a red mycelium pigment which is acting as a mycotoxin. The first step is performed by the polyketide synthase which condenses one acetyl-CoA and 6 malonyl-CoA units to form the first intermediate, the cyclic heptaketide and yellow pigment YWA1. The C2 hydroxyl group in the pyrone ring of YWA1 is probably formed during ring closure by an aldol-type cyclization reaction. The dehydratase aurZ then acts as the first tailoring enzyme in the aurofusarin biosynthetic pathway by converting YWA1 to nor-rubrofusarin. Nor-rubrofusarin is then methylated to rubrofusarin by the O-methyltransferase aurJ. Rubrofusarin is then transported across the plasma membrane by the rubrofusarin-specific pump aurT for further enzymatic processing by the extracellular complex composed of GIP1, aurF, aurO and aurS to yield aurofusarin. This chain is Monooxygenase aurF, found in Gibberella zeae (strain ATCC MYA-4620 / CBS 123657 / FGSC 9075 / NRRL 31084 / PH-1) (Wheat head blight fungus).